A 436-amino-acid polypeptide reads, in one-letter code: Gamma-glutamyl phosphate reductase (436 aa).

It belongs to the gamma-glutamyl phosphate reductase family.

The protein resides in the cytoplasm. It catalyses the reaction L-glutamate 5-semialdehyde + phosphate + NADP(+) = L-glutamyl 5-phosphate + NADPH + H(+). It participates in amino-acid biosynthesis; L-proline biosynthesis; L-glutamate 5-semialdehyde from L-glutamate: step 2/2. Catalyzes the NADPH-dependent reduction of L-glutamate 5-phosphate into L-glutamate 5-semialdehyde and phosphate. The product spontaneously undergoes cyclization to form 1-pyrroline-5-carboxylate. This chain is Gamma-glutamyl phosphate reductase, found in Polaromonas sp. (strain JS666 / ATCC BAA-500).